Reading from the N-terminus, the 79-residue chain is Acyl carrier protein 1 (79 aa).

The region spanning 2 to 77 is the Carrier domain; sequence DNIEQRVKKI…QAIDYARANV (76 aa). Position 37 is an O-(pantetheine 4'-phosphoryl)serine (S37).

The protein belongs to the acyl carrier protein (ACP) family. In terms of processing, 4'-phosphopantetheine is transferred from CoA to a specific serine of apo-ACP by AcpS. This modification is essential for activity because fatty acids are bound in thioester linkage to the sulfhydryl of the prosthetic group.

It is found in the cytoplasm. The protein operates within lipid metabolism; fatty acid biosynthesis. In terms of biological role, carrier of the growing fatty acid chain in fatty acid biosynthesis. This Ralstonia nicotianae (strain ATCC BAA-1114 / GMI1000) (Ralstonia solanacearum) protein is Acyl carrier protein 1.